Here is a 277-residue protein sequence, read N- to C-terminus: 3-methyl-2-oxobutanoate hydroxymethyltransferase (277 aa).

Mg(2+) contacts are provided by Asp43 and Asp82. 3-methyl-2-oxobutanoate is bound by residues Asp43–Ser44, Asp82, and Lys112. Mg(2+) is bound at residue Glu114. Residue Glu181 is the Proton acceptor of the active site.

It belongs to the PanB family. Homodecamer; pentamer of dimers. The cofactor is Mg(2+).

The protein resides in the cytoplasm. It carries out the reaction 3-methyl-2-oxobutanoate + (6R)-5,10-methylene-5,6,7,8-tetrahydrofolate + H2O = 2-dehydropantoate + (6S)-5,6,7,8-tetrahydrofolate. The protein operates within cofactor biosynthesis; (R)-pantothenate biosynthesis; (R)-pantoate from 3-methyl-2-oxobutanoate: step 1/2. In terms of biological role, catalyzes the reversible reaction in which hydroxymethyl group from 5,10-methylenetetrahydrofolate is transferred onto alpha-ketoisovalerate to form ketopantoate. This is 3-methyl-2-oxobutanoate hydroxymethyltransferase from Listeria monocytogenes serotype 4a (strain HCC23).